The chain runs to 301 residues: uncharacterized protein (301 aa).

Transmembrane regions (helical) follow at residues 1-21, 33-53, 72-92, 101-121, 124-144, 185-205, 220-240, 246-266, and 270-290; these read MSWI…LGIV, SVLF…YFYY, AMSL…KIPG, FGII…TILI, FAWL…KTFY, YFTP…VFAI, IIYT…FCLA, FSYI…KIFI, and IAIP…FGII.

It belongs to the TerC family.

It is found in the cell membrane. This is an uncharacterized protein from Rickettsia felis (strain ATCC VR-1525 / URRWXCal2) (Rickettsia azadi).